A 176-amino-acid chain; its full sequence is RNA pyrophosphohydrolase (176 aa).

In terms of domain architecture, Nudix hydrolase spans 6–149 (GYRPNVGIVI…KRDVYRRVMK (144 aa)). The Nudix box motif lies at 38–59 (GGINPGESPEQAMYRELYEEVG).

This sequence belongs to the Nudix hydrolase family. RppH subfamily. A divalent metal cation serves as cofactor.

Accelerates the degradation of transcripts by removing pyrophosphate from the 5'-end of triphosphorylated RNA, leading to a more labile monophosphorylated state that can stimulate subsequent ribonuclease cleavage. This Photorhabdus laumondii subsp. laumondii (strain DSM 15139 / CIP 105565 / TT01) (Photorhabdus luminescens subsp. laumondii) protein is RNA pyrophosphohydrolase.